Here is a 103-residue protein sequence, read N- to C-terminus: Large ribosomal subunit protein bL21 (103 aa).

Belongs to the bacterial ribosomal protein bL21 family. As to quaternary structure, part of the 50S ribosomal subunit. Contacts protein L20.

Functionally, this protein binds to 23S rRNA in the presence of protein L20. This chain is Large ribosomal subunit protein bL21, found in Aliivibrio salmonicida (strain LFI1238) (Vibrio salmonicida (strain LFI1238)).